Here is a 362-residue protein sequence, read N- to C-terminus: Meiotic recombination protein SPO11-1 (362 aa).

In terms of domain architecture, Topo IIA-type catalytic spans 8-142 (SESTNLLQRI…LNVVSVGNGL (135 aa)). Y103 (O-(5'-phospho-DNA)-tyrosine intermediate) is an active-site residue. Mg(2+)-binding residues include E189 and D241.

Belongs to the TOP6A family. As to quaternary structure, heterotetramer of 2 SPO11 (SPO11-1 and/or SPO11-2) and 2 MTOPVIB chains. Interacts with MTOPVIB. May form a heterodimer with SPO11-2. Interacts with PRD1. Does not interact with TOP6B. Mg(2+) is required as a cofactor. Expressed in shoots, young seedlings, flowers and reproductive tissues. Not found in roots or rosette leaves.

It is found in the nucleus. The catalysed reaction is ATP-dependent breakage, passage and rejoining of double-stranded DNA.. Component of a topoisomerase 6 complex specifically required for meiotic recombination. Together with MTOPVIB, mediates DNA cleavage that forms the double-strand breaks (DSB) that initiate meiotic recombination. The complex promotes relaxation of negative and positive supercoiled DNA and DNA decatenation through cleavage and ligation cycles. The protein is Meiotic recombination protein SPO11-1 of Arabidopsis thaliana (Mouse-ear cress).